The following is a 416-amino-acid chain: Enterobactin exporter EntS (416 aa).

Residues 1-21 (MNRQSWLLNLSLLKTHPAFRA) are Cytoplasmic-facing. A helical transmembrane segment spans residues 22–42 (VFLARFISIVSLGLLGVAVPV). Over 43 to 55 (QIQMMTHSTWQVG) the chain is Periplasmic. The chain crosses the membrane as a helical span at residues 56 to 76 (LSVTLTGSAMFVGLMVGGVLA). Residues 77–83 (DRYERKK) lie on the Cytoplasmic side of the membrane. Residues 84–104 (VILLARGTCGIGFIGLCLNAL) form a helical membrane-spanning segment. Topologically, residues 105–109 (LPEPS) are periplasmic. Residues 110 to 130 (LLAIYLLGLWDGFFASLGVTA) form a helical membrane-spanning segment. The Cytoplasmic segment spans residues 131 to 156 (LLAATPALVGRENLMQAGAITMLTVR). A helical membrane pass occupies residues 157-177 (LGSVISPMLGGVLLATGGVAW). Residue asparagine 178 is a topological domain, periplasmic. The chain crosses the membrane as a helical span at residues 179–199 (YGLAAAGTFITLLPLLSLPAL). The Cytoplasmic segment spans residues 200–218 (PPPPQPREHPLKSLLAAFR). A helical transmembrane segment spans residues 219–239 (FLLSSPLIGGIALLGGLLTMA). The Periplasmic segment spans residues 240-256 (SAVRVLYPALAINWHMS). Residues 257–277 (AAQIGLLYAAIPLGAAVGALT) form a helical membrane-spanning segment. Topologically, residues 278–287 (SGQLAHSVRP) are cytoplasmic. Residues 288 to 307 (GLLMLVSTVGSFLAIGVFGL) traverse the membrane as a helical segment. The Periplasmic segment spans residues 308 to 313 (MPVWLL). The helical transmembrane segment at 314-336 (GVICLALFGWLSAISSLLQYTLL) threads the bilayer. Residues 337 to 356 (QTQTPEAMLGRINGLWTAQN) are Cytoplasmic-facing. Residues 357–377 (VTGDAIGAALLGGLGAMMTPV) traverse the membrane as a helical segment. Alanine 378 is a topological domain (periplasmic). A helical membrane pass occupies residues 379 to 399 (SASVSGFGLVIVGLLLMLLLG). Residues 400 to 416 (ELRRFRQPPPVPDGAPL) are Cytoplasmic-facing.

Belongs to the major facilitator superfamily. EntS (TC 2.A.1.38) family.

It localises to the cell inner membrane. Functionally, component of an export pathway for enterobactin. This chain is Enterobactin exporter EntS, found in Citrobacter koseri (strain ATCC BAA-895 / CDC 4225-83 / SGSC4696).